Consider the following 786-residue polypeptide: Rho GTPase-activating protein 10 (786 aa).

Residues 7 to 262 (EFSDCYLDSP…IRQNPKDQKR (256 aa)) enclose the BAR domain. In terms of domain architecture, PH spans 265 to 372 (QFTAEGYLYV…WLEALGGKEA (108 aa)). Residues 389-574 (AQLDKMGFTI…ILIENHEKIF (186 aa)) form the Rho-GAP domain. Disordered stretches follow at residues 584-609 (EPTC…RTKR) and 622-714 (EGDS…PFPL). Over residues 599-609 (QSKRQGQRTKR) the composition is skewed to basic residues. A compositionally biased stretch (low complexity) spans 634–649 (PSSSQDSLSTPSPTTS). Over residues 673–701 (TATTPSQTRPSMVQWLNMQSPTTPSSNPA) the composition is skewed to polar residues. Residues 702–714 (GTPPSPRMSPFPL) show a composition bias toward pro residues. Residues 728-786 (VINRKARAVYPCEAEHSSELSFEIGAIFEDVQTSREPGWLEGTLNGKRGLIPQNYVKLL) form the SH3 domain.

Interacts with PKN3. Interacts with caspase-activated PAK2 proteolytic fragment PAK-2p34; the interaction does not affect ARHGAP10 GTPase activation activity towards RHOA and CDC42. Interacts via its SH3 domain with PTK2/FAK1. Interacts with PTK2B/PYK2; the interaction negatively regulates ARHGAP10 GTPase-activating activity. Interacts with MICAL1 and WDR44; complex formation might transit from GRAF2/ARHGAP10-MICAL1 to GRAF2/ARHGAP10-WDR44 complexes. In terms of processing, phosphorylated on tyrosine residues, probably involving PTK2B/PYK2. As to expression, high levels of expression in brain, testes, liver, heart and kidney.

The protein localises to the cytoplasm. The protein resides in the perinuclear region. Its subcellular location is the cell membrane. It is found in the endosome membrane. Functionally, GTPase-activating protein that catalyzes the conversion of active GTP-bound Rho GTPases to their inactive GDP-bound form, thus suppressing various Rho GTPase-mediated cellular processes. Also converts Cdc42 to an inactive GDP-bound state. Essential for PTKB2 regulation of cytoskeletal organization via Rho family GTPases. Inhibits PAK2 proteolytic fragment PAK-2p34 kinase activity and changes its localization from the nucleus to the perinuclear region. Stabilizes PAK-2p34 thereby increasing stimulation of cell death. Associates with MICAL1 on the endosomal membrane to promote Rab8-Rab10-dependent tubule extension. After dissociation with MICAL1, recruits WDR44 which connects the endoplasmic reticulum (ER) with the endosomal tubule, thereby participating in the export of a subset of neosynthesized proteins. This is Rho GTPase-activating protein 10 (Arhgap10) from Mus musculus (Mouse).